Reading from the N-terminus, the 469-residue chain is Relaxin-3 receptor 1 (469 aa).

At 1-81 the chain is on the extracellular side; that stretch reads MQMADAATIA…ESADTEARVR (81 aa). Residues asparagine 36 and asparagine 40 are each glycosylated (N-linked (GlcNAc...) asparagine). Residues 82–102 form a helical membrane-spanning segment; sequence ILISVVYWVVCALGLAGNLLV. Topologically, residues 103 to 119 are cytoplasmic; the sequence is LYLMKSMQGWRKSSINL. Residues 120–140 form a helical membrane-spanning segment; that stretch reads FVTNLALTDFQFVLTLPFWAV. Residues 141-156 lie on the Extracellular side of the membrane; sequence ENALDFKWPFGKAMCK. An intrachain disulfide couples cysteine 155 to cysteine 247. Residues 157–177 traverse the membrane as a helical segment; sequence IVSMVTSMNMYASVFFLTAMS. The Cytoplasmic segment spans residues 178-215; that stretch reads VTRYHSVASALKSHRTRGHGRGDCCGRSLGDSCCFSAK. Residues 216 to 236 form a helical membrane-spanning segment; the sequence is ALCVWIWALAALASLPSAIFS. Topologically, residues 237 to 270 are extracellular; it reads TTVKVMGEELCLVRFPDKLLGRDRQFWLGLYHSQ. A helical membrane pass occupies residues 271–291; that stretch reads KVLLGFVLPLGIIILCYLLLV. Over 292–329 the chain is Cytoplasmic; the sequence is RFIADRRAAGTKGGAAVAGGRPTGASARRLSKVTKSVT. A helical transmembrane segment spans residues 330–350; the sequence is IVVLSFFLCWLPNQALTTWSI. The Extracellular segment spans residues 351-356; it reads LIKFNA. The chain crosses the membrane as a helical span at residues 357–377; the sequence is VPFSQEYFLCQVYAFPVSVCL. At 378-469 the chain is on the cytoplasmic side; it reads AHSNSCLNPV…YDLLPSSSAY (92 aa).

This sequence belongs to the G-protein coupled receptor 1 family. Expressed predominantly in brain regions. Highest expression in substantia nigra and pituitary, followed by hippocampus, spinal cord, amygdala, caudate nucleus and corpus callosum, quite low level in cerebellum. In peripheral tissues, relatively high levels in adrenal glands, low levels in pancreas, salivary gland, placenta, mammary gland and testis.

It is found in the cell membrane. Functionally, receptor for RNL3/relaxin-3. Binding of the ligand inhibit cAMP accumulation. The chain is Relaxin-3 receptor 1 (RXFP3) from Homo sapiens (Human).